A 118-amino-acid chain; its full sequence is Large ribosomal subunit protein bL19 (118 aa).

The protein belongs to the bacterial ribosomal protein bL19 family.

In terms of biological role, this protein is located at the 30S-50S ribosomal subunit interface and may play a role in the structure and function of the aminoacyl-tRNA binding site. The protein is Large ribosomal subunit protein bL19 of Metamycoplasma arthritidis (strain 158L3-1) (Mycoplasma arthritidis).